A 1077-amino-acid polypeptide reads, in one-letter code: Error-prone DNA polymerase (1077 aa).

Belongs to the DNA polymerase type-C family. DnaE2 subfamily.

The protein localises to the cytoplasm. The catalysed reaction is DNA(n) + a 2'-deoxyribonucleoside 5'-triphosphate = DNA(n+1) + diphosphate. In terms of biological role, DNA polymerase involved in damage-induced mutagenesis and translesion synthesis (TLS). It is not the major replicative DNA polymerase. This chain is Error-prone DNA polymerase, found in Brucella suis biovar 1 (strain 1330).